A 142-amino-acid polypeptide reads, in one-letter code: MKLLIALFALVTAVNAQNGFGQVGQGGYGGQGGFGGFGGIGGQAGFGGQIGFTGQGGVGGQVGIGQGGVHPGQGGFAGQGSPNQYQPGYGSPVGSGHFHGTNPVESGHFHENPHEYPEHHGDHHREHHEHHGHHEHHGHHRH.

Residues 1–16 (MKLLIALFALVTAVNA) form the signal peptide. The interval 75 to 142 (GFAGQGSPNQ…HHEHHGHHRH (68 aa)) is disordered. Basic and acidic residues predominate over residues 107–124 (GHFHENPHEYPEHHGDHH). Residues 125–142 (REHHEHHGHHEHHGHHRH) are compositionally biased toward basic residues.

It localises to the secreted. Its function is as follows. Likely to be involved in the establishment of the head. The protein is Protein spalt-accessory (sala) of Drosophila melanogaster (Fruit fly).